The chain runs to 67 residues: Sec-independent protein translocase protein TatA (67 aa).

Residues Met1–Gly21 traverse the membrane as a helical segment. The tract at residues Pro46 to Ala67 is disordered. Over residues Gly58–Ala67 the composition is skewed to basic and acidic residues.

It belongs to the TatA/E family. In terms of assembly, the Tat system comprises two distinct complexes: a TatABC complex, containing multiple copies of TatA, TatB and TatC subunits, and a separate TatA complex, containing only TatA subunits. Substrates initially bind to the TatABC complex, which probably triggers association of the separate TatA complex to form the active translocon.

It localises to the cell inner membrane. In terms of biological role, part of the twin-arginine translocation (Tat) system that transports large folded proteins containing a characteristic twin-arginine motif in their signal peptide across membranes. TatA could form the protein-conducting channel of the Tat system. This chain is Sec-independent protein translocase protein TatA, found in Nitratidesulfovibrio vulgaris (strain DSM 19637 / Miyazaki F) (Desulfovibrio vulgaris).